The primary structure comprises 150 residues: U1 small nuclear ribonucleoprotein C (150 aa).

The Matrin-type zinc-finger motif lies at 4–36; the sequence is YYCDYCKSYLTHDTMSVRKSHLQGRNHIKFYCD. Residues 66-127 are disordered; that stretch reads SDAKKSNGSS…PPNLSGLPLP (62 aa). The span at 80–92 shows a compositional bias: basic and acidic residues; the sequence is DIDKKENSSDHNK. Residues 103–112 show a composition bias toward acidic residues; that stretch reads NDNDDDDDEM.

This sequence belongs to the U1 small nuclear ribonucleoprotein C family. U1 snRNP is composed of the 7 core Sm proteins B/B', D1, D2, D3, E, F and G that assemble in a heptameric protein ring on the Sm site of the small nuclear RNA to form the core snRNP, and at least 3 U1 snRNP-specific proteins U1-70K, U1-A and U1-C. U1-C interacts with U1 snRNA and the 5' splice-site region of the pre-mRNA.

It localises to the nucleus. Functionally, component of the spliceosomal U1 snRNP, which is essential for recognition of the pre-mRNA 5' splice-site and the subsequent assembly of the spliceosome. U1-C is directly involved in initial 5' splice-site recognition for both constitutive and regulated alternative splicing. The interaction with the 5' splice-site seems to precede base-pairing between the pre-mRNA and the U1 snRNA. Stimulates commitment or early (E) complex formation by stabilizing the base pairing of the 5' end of the U1 snRNA and the 5' splice-site region. The sequence is that of U1 small nuclear ribonucleoprotein C from Candida albicans (strain WO-1) (Yeast).